We begin with the raw amino-acid sequence, 287 residues long: ATP synthase gamma chain (287 aa).

This sequence belongs to the ATPase gamma chain family. In terms of assembly, F-type ATPases have 2 components, CF(1) - the catalytic core - and CF(0) - the membrane proton channel. CF(1) has five subunits: alpha(3), beta(3), gamma(1), delta(1), epsilon(1). CF(0) has three main subunits: a, b and c.

The protein localises to the cell inner membrane. Produces ATP from ADP in the presence of a proton gradient across the membrane. The gamma chain is believed to be important in regulating ATPase activity and the flow of protons through the CF(0) complex. This Ruthia magnifica subsp. Calyptogena magnifica protein is ATP synthase gamma chain.